We begin with the raw amino-acid sequence, 365 residues long: DNA repair protein rhp51 (365 aa).

The disordered stretch occupies residues 1-25 (MADTEVEMQVSAADTNNNENGQAQS). Polar residues predominate over residues 12 to 25 (AADTNNNENGQAQS). Position 149-156 (149-156 (GEFRTGKS)) interacts with ATP.

This sequence belongs to the RecA family. RAD51 subfamily. Interacts with rad22, rad54, rdh54, rhp54, rti1, swi2 and swi5. Forms homooiligomers.

The protein localises to the nucleus. In terms of biological role, required both for recombination and for the repair of DNA damage caused by X-rays. Binds to single and double-stranded DNA, in the presence of magnesium, and exhibits DNA-dependent ATPase activity. Promotes DNA strand annealing and strand exchange via DNA recombinase activity and forms helical nucleoprotein filaments. The sequence is that of DNA repair protein rhp51 (rhp51) from Schizosaccharomyces pombe (strain 972 / ATCC 24843) (Fission yeast).